Here is a 218-residue protein sequence, read N- to C-terminus: Oxidoreductase claN (218 aa).

NADP(+) contacts are provided by Lys38, Asp57, and Asn82. Residue Ser134 is the Proton donor of the active site. NADP(+) contacts are provided by Tyr148, Lys152, and Thr183. Tyr148 serves as the catalytic Proton acceptor. Lys152 serves as the catalytic Lowers pKa of active site Tyr.

This sequence belongs to the short-chain dehydrogenases/reductases (SDR) family.

It participates in pigment biosynthesis. In terms of biological role, oxidoreductase; part of the gene cluster that mediates the biosynthesis of the bianthraquinone cladofulvin, a conidial pigment not required for virulence but that plays a role in fitness and resistance to environmental stresses including UV light and low-temperature stress. The pathway begins with the synthesis of atrochrysone thioester by the polyketide synthase (PKS) claG. The atrochrysone carboxyl ACP thioesterase claF then breaks the thioester bond and releases the atrochrysone carboxylic acid from claG. This compound is decarboxylated by claH to yield emodin, which is further converted to chrysophanol hydroquinone by the reductase claC and the dehydratase claB. The cytochrome P450 monooxygenase claM then catalyzes the dimerization of nataloe-emodin to cladofulvin. This Passalora fulva (Tomato leaf mold) protein is Oxidoreductase claN.